A 437-amino-acid chain; its full sequence is Immunoglobulin superfamily member 11 (437 aa).

A signal peptide spans 1–22; that stretch reads MTCRGSPLAPLLLFSLHGVAAS. An Ig-like V-type domain is found at 23-136; it reads LEVSESPGSV…DRGGRNIGVT (114 aa). Topologically, residues 23-241 are extracellular; it reads LEVSESPGSV…VISPQPRSIG (219 aa). Disulfide bonds link cysteine 44–cysteine 120 and cysteine 165–cysteine 215. A glycan (N-linked (GlcNAc...) asparagine) is linked at asparagine 102. The region spanning 144–234 is the Ig-like C2-type domain; the sequence is PSAPHCQIQG…TCLLDLQVIS (91 aa). A helical transmembrane segment spans residues 242 to 262; that stretch reads LIAGAIGTGAVIIIFCIALIL. Over 263–437 the chain is Cytoplasmic; the sequence is GAFFYWRSKN…PAQSRAGSLV (175 aa). Arginine 379 bears the Omega-N-methylarginine mark. Positions 382–405 are disordered; that stretch reads SLPAVSRSNGSVSRKARPPPVPSL.

N-glycosylated.

It localises to the cell membrane. In terms of biological role, functions as a cell adhesion molecule through homophilic interaction. Stimulates cell growth. The protein is Immunoglobulin superfamily member 11 (IGSF11) of Bos taurus (Bovine).